A 741-amino-acid polypeptide reads, in one-letter code: Eukaryotic translation initiation factor 3 subunit B (741 aa).

A compositionally biased stretch (polar residues) spans 1–10 (MAPSFDTLSE). The interval 1 to 22 (MAPSFDTLSEQDLHEEEEEEID) is disordered. The span at 13–22 (LHEEEEEEID) shows a compositional bias: acidic residues. The region spanning 40–126 (TFVVIDGLPV…HTLLVNKLMD (87 aa)) is the RRM domain. WD repeat units lie at residues 193 to 230 (AHWT…KQKQ), 232 to 289 (PHPF…RSFV), 303 to 344 (QPKK…LLGK), 514 to 557 (IEKK…EKPE), and 572 to 610 (LEHY…HTFS). The interval 695-722 (KDAYGLPEDVDDPKKAKDAPAVTSEQGE) is disordered.

Belongs to the eIF-3 subunit B family. As to quaternary structure, component of the eukaryotic translation initiation factor 3 (eIF-3) complex.

The protein localises to the cytoplasm. Functionally, RNA-binding component of the eukaryotic translation initiation factor 3 (eIF-3) complex, which is involved in protein synthesis of a specialized repertoire of mRNAs and, together with other initiation factors, stimulates binding of mRNA and methionyl-tRNAi to the 40S ribosome. The eIF-3 complex specifically targets and initiates translation of a subset of mRNAs involved in cell proliferation. The sequence is that of Eukaryotic translation initiation factor 3 subunit B (prt1) from Aspergillus clavatus (strain ATCC 1007 / CBS 513.65 / DSM 816 / NCTC 3887 / NRRL 1 / QM 1276 / 107).